The following is a 150-amino-acid chain: Large ribosomal subunit protein bL9 (150 aa).

Belongs to the bacterial ribosomal protein bL9 family.

Functionally, binds to the 23S rRNA. The polypeptide is Large ribosomal subunit protein bL9 (Shewanella frigidimarina (strain NCIMB 400)).